A 79-amino-acid polypeptide reads, in one-letter code: Large ribosomal subunit protein bL31 (79 aa).

Belongs to the bacterial ribosomal protein bL31 family. Type A subfamily. Part of the 50S ribosomal subunit.

Functionally, binds the 23S rRNA. The sequence is that of Large ribosomal subunit protein bL31 from Synechococcus sp. (strain CC9902).